Consider the following 436-residue polypeptide: 3-ketoacyl-CoA thiolase (436 aa).

Residue Cys-99 is the Acyl-thioester intermediate of the active site. Residues His-392 and Cys-422 each act as proton acceptor in the active site.

It belongs to the thiolase-like superfamily. Thiolase family. Heterotetramer of two alpha chains (FadJ) and two beta chains (FadI).

It localises to the cytoplasm. The enzyme catalyses an acyl-CoA + acetyl-CoA = a 3-oxoacyl-CoA + CoA. Its pathway is lipid metabolism; fatty acid beta-oxidation. Catalyzes the final step of fatty acid oxidation in which acetyl-CoA is released and the CoA ester of a fatty acid two carbons shorter is formed. The polypeptide is 3-ketoacyl-CoA thiolase (Serratia proteamaculans (strain 568)).